Consider the following 115-residue polypeptide: Large ribosomal subunit protein bL19 (115 aa).

This sequence belongs to the bacterial ribosomal protein bL19 family.

Functionally, this protein is located at the 30S-50S ribosomal subunit interface and may play a role in the structure and function of the aminoacyl-tRNA binding site. The chain is Large ribosomal subunit protein bL19 from Fervidobacterium nodosum (strain ATCC 35602 / DSM 5306 / Rt17-B1).